The sequence spans 248 residues: tRNA (guanine-N(1)-)-methyltransferase (248 aa).

S-adenosyl-L-methionine contacts are provided by residues Gly-113 and 133–138 (IGDYVL).

Belongs to the RNA methyltransferase TrmD family. Homodimer.

It is found in the cytoplasm. The catalysed reaction is guanosine(37) in tRNA + S-adenosyl-L-methionine = N(1)-methylguanosine(37) in tRNA + S-adenosyl-L-homocysteine + H(+). In terms of biological role, specifically methylates guanosine-37 in various tRNAs. The chain is tRNA (guanine-N(1)-)-methyltransferase from Shewanella piezotolerans (strain WP3 / JCM 13877).